The following is a 330-amino-acid chain: Ig gamma-2A chain C region, A allele (330 aa).

Ig-like domains lie at 6-98 (PSVY…KKIE), 121-220 (PSVF…RTIS), and 229-325 (PQVY…KSFS). 3 cysteine pairs are disulfide-bonded: cysteine 27–cysteine 82, cysteine 144–cysteine 204, and cysteine 250–cysteine 308. N-linked (GlcNAc...) asparagine glycosylation is present at asparagine 180.

In Mus musculus (Mouse), this protein is Ig gamma-2A chain C region, A allele (Ighg).